The following is a 64-amino-acid chain: Sperm protamine P1 (64 aa).

The disordered stretch occupies residues 1–64 (MARYRHSRSR…SRRRRRRYYY (64 aa)).

The protein belongs to the protamine P1 family. As to expression, testis.

The protein resides in the nucleus. It localises to the chromosome. Functionally, protamines substitute for histones in the chromatin of sperm during the haploid phase of spermatogenesis. They compact sperm DNA into a highly condensed, stable and inactive complex. In Hypsiprymnodon moschatus (Musky rat kangaroo), this protein is Sperm protamine P1 (PRM1).